We begin with the raw amino-acid sequence, 122 residues long: Head fiber dimeric protein (122 aa).

As to quaternary structure, homodimer. Interacts with the major capsid protein.

The protein localises to the virion. Forms short fibers at the surface of the viral capsid. In Bacteroides intestinalis (Bacteroides phage PhiCrAss001), this protein is Head fiber dimeric protein.